Consider the following 1392-residue polypeptide: Protein dispatched homolog 3 (1392 aa).

The Cytoplasmic portion of the chain corresponds to 1-73 (MDTEDDPLLQ…LGWAFTNPCC (73 aa)). The segment at 16-40 (EEQEEEEATGETFLGAQKPGPQPGA) is disordered. Residues 74–94 (AGLVLFLGCSIPMALSAFMFL) traverse the membrane as a helical segment. Residues 95-462 (YYPPLDIDIS…YEVRRTFNND (368 aa)) are Lumenal-facing. Residues 162 to 248 (GNRSRQASRA…HAAVAANQSR (87 aa)) form a disordered region. N-linked (GlcNAc...) asparagine glycosylation is present at Asn-163. A compositionally biased stretch (polar residues) spans 190-199 (SAAQKPTANR). In terms of domain architecture, SSD spans 457–615 (RTFNNDMLLA…LVTMPAALGL (159 aa)). Residues 463 to 483 (MLLAFISSSCIAALVYILTSC) form a helical membrane-spanning segment. Residue Ser-484 is a topological domain, cytoplasmic. Residues 485–505 (VFLSFFGIASIGLSCLVALFL) traverse the membrane as a helical segment. Topologically, residues 506–508 (YHV) are lumenal. The helical transmembrane segment at 509–529 (VFGIQYLGILNGVAAFVIVGI) threads the bilayer. Residues 530–573 (GVDDVFVFINTYRQATHLEDPQLRMIHTVQTAGKATFFTSLTTA) lie on the Cytoplasmic side of the membrane. A helical transmembrane segment spans residues 574–594 (AAYAANVFSQIPAVHDFGLFM). A topological domain (lumenal) is located at residue Ser-595. A helical transmembrane segment spans residues 596 to 616 (LIVSCCWLAVLVTMPAALGLW). The Cytoplasmic segment spans residues 617 to 729 (SLYLAPLESS…WVLWSAVKSR (113 aa)). Residues 730–750 (WVIVGLFVSILILSLVFASRL) form a helical membrane-spanning segment. Over 751 to 1182 (RPASRAPLLF…IFMEIVGVQS (432 aa)) the chain is Lumenal. Residue Asn-1021 is glycosylated (N-linked (GlcNAc...) asparagine). A helical transmembrane segment spans residues 1183–1203 (ALCGLVLSLLICVAAVAVFTT). Position 1204 (His-1204) is a topological domain, cytoplasmic. Residues 1205–1225 (ILLLLPVLLSILGIVCLVVTI) form a helical membrane-spanning segment. Topologically, residues 1226–1291 (MYWSGWEMGA…TLEAVRHVGV (66 aa)) are lumenal. The chain crosses the membrane as a helical span at residues 1292-1312 (AIVSSALTTVIATVPLFFCII). Residues 1313–1320 (APFAKFGK) are Cytoplasmic-facing. The helical transmembrane segment at 1321–1341 (IVALNTGVSILYTLTVSTALL) threads the bilayer. Residues 1342–1358 (GIMAPSSFTRTRTSFLK) lie on the Lumenal side of the membrane. A helical membrane pass occupies residues 1359–1379 (ALGAVLLAGALGLGACLVLLQ). Over 1380 to 1392 (SGYKIPLPAGASL) the chain is Cytoplasmic.

The protein belongs to the patched family. In terms of tissue distribution, expressed in brain and testis.

The protein localises to the endoplasmic reticulum membrane. It localises to the nucleus membrane. The protein resides in the cytoplasmic vesicle membrane. Plays a role in neuronal proliferation and differentiation. Plays a role in the accumulation of cellular cholesterol. Involved in intracellular lipid droplet formation. May contribute to cholesterol homeostasis in neuronal cells. The chain is Protein dispatched homolog 3 from Homo sapiens (Human).